A 712-amino-acid polypeptide reads, in one-letter code: T-box transcription factor TBX2 (712 aa).

The T-box DNA-binding region spans leucine 109–aspartate 287. The interval proline 313–leucine 450 is disordered. Pro residues predominate over residues aspartate 326–serine 336. Phosphoserine is present on residues serine 336, serine 342, and serine 360. 3 stretches are compositionally biased toward basic and acidic residues: residues glutamate 363–alanine 372, threonine 391–alanine 409, and serine 421–glutamate 444. The tract at residues glycine 518–alanine 601 is repression domain 1 (RD1). Phosphoserine is present on residues serine 622, serine 653, serine 657, and serine 676. Residues leucine 637–glutamate 687 are disordered.

As to quaternary structure, binds DNA as a monomer. Interacts with PML (isoform PML-2, isoform PML-3 and isoform PML-4). In terms of tissue distribution, expressed primarily in adult in kidney, lung, and placenta. Weak expression in heart and ovary.

It is found in the nucleus. In terms of biological role, transcription factor which acts as a transcriptional repressor. May also function as a transcriptional activator. Binds to the palindromic T site 5'-TTCACACCTAGGTGTGAA-3' DNA sequence, or a half-site, which are present in the regulatory region of several genes. Required for cardiac atrioventricular canal formation. May cooperate with NKX2.5 to negatively modulate expression of NPPA/ANF in the atrioventricular canal. May play a role as a positive regulator of TGFB2 expression, perhaps acting in concert with GATA4 in the developing outflow tract myocardium. Plays a role in limb pattern formation. Acts as a transcriptional repressor of ADAM10 gene expression, perhaps in concert with histone deacetylase HDAC1 as cofactor. Involved in branching morphogenesis in both developing lungs and adult mammary glands, via negative modulation of target genes; acting redundantly with TBX3. Required, together with TBX3, to maintain cell proliferation in the embryonic lung mesenchyme; perhaps acting downstream of SHH, BMP and TGFbeta signaling. Involved in modulating early inner ear development, acting independently of, and also redundantly with TBX3, in different subregions of the developing ear. Acts as a negative regulator of PML function in cellular senescence. Acts as a negative regulator of expression of CDKN1A/p21, IL33 and CCN4; repression of CDKN1A is enhanced in response to UV-induced stress, perhaps as a result of phosphorylation by p38 MAPK. Negatively modulates expression of CDKN2A/p14ARF and CDH1/E-cadherin. Plays a role in induction of the epithelial-mesenchymal transition (EMT). Plays a role in melanocyte proliferation, perhaps via regulation of cyclin CCND1. Involved in melanogenesis, acting via negative modulation of expression of DHICA oxidase/TYRP1 and P protein/OCA2. Involved in regulating retinal pigment epithelium (RPE) cell proliferation, perhaps via negatively modulating transcription of the transcription factor CEBPD. The protein is T-box transcription factor TBX2 (TBX2) of Homo sapiens (Human).